The chain runs to 565 residues: MVFSSPSWVPRIPCEIPDSIPVGQFALEGNTSLPPQCGGRPPFVCAITGKSYSTKVLVDRVEFLSRSLAQELGWSPNEGEPEDKVVGIYSWNTLDFFALCWAVHRLNGICLPLHPFSIVPEVVAHMKRAKCRVIFTCQSLVANTLEAARELSIPGDKIYTTALPEAYLQNPEPIDQFKSVDQLIAEGEKLQRLPPLQWEKGRAKIQVAYYCATSGTSGKQKLAKITHYNFIANVMQVCMHESYAKNGRNEIAFGAIPLTHGYGLNIGHIMVYRGDTYVICPRFDMQLMLKTIERFRVERLYVVPPILAALAANPFLLDLHDLSSVQATVTGAAALDRSIAAKLNKLRPTWKINHAYGLTETGVVATLTSPHDVWHGSSGSLLPSFEIRLVKPDGTDAEGLDEPGEVHFNSPSCFLGYVGDDESNKNTFDEKGWLKSGDIGVFRKSPNGHAHLFILERIKDMIKVKGEQVLPRDIESVLLSHPAVIDAAVIGVPDELSGERAKAYIVRSKTVMEDLDEDDLADEIDEFVQGKLHESHWLHDRIVFLEKLPKSESGKVLKKDLKAMN.

ATP-binding positions include T213 to K221, H354 to T359, D438, R457, and K555. Positions D284 to H354 are SBD1. The interval A355–Y417 is SBD2.

This sequence belongs to the ATP-dependent AMP-binding enzyme family.

Its pathway is antibiotic biosynthesis. Acyl-CoA ligase; part of the gene cluster that mediates the biosynthesis of emericellamides, secondary metabolites acting as antibiotics. The biosynthesis of emericellamides initiates from the highly reducing polyketide synthase easB which catalyzes the formation of the linear polyketide chain. EasB produces several polyketides that can be further processed by the downstream enzymes. The polyketides are released from easB as linear polyketide carboxylic acids, which are converted to CoA thioesters by the acyl-CoA ligase easD. The substrates are then loaded onto the acyltransferase easC, which shuttles them to the first thiolation (T) domain of the nonribosomal peptide synthetase easA. EasA then performs condensation of the polyketides with one glycine, two alanine, one valine and one leucine residues. A last step of cyclization leads to the production of emericellamides. The chain is Acyl-CoA ligase easD from Emericella nidulans (strain FGSC A4 / ATCC 38163 / CBS 112.46 / NRRL 194 / M139) (Aspergillus nidulans).